The chain runs to 249 residues: tRNA pseudouridine synthase A (249 aa).

D52 functions as the Nucleophile in the catalytic mechanism. Y110 lines the substrate pocket.

Belongs to the tRNA pseudouridine synthase TruA family. As to quaternary structure, homodimer.

It carries out the reaction uridine(38/39/40) in tRNA = pseudouridine(38/39/40) in tRNA. Formation of pseudouridine at positions 38, 39 and 40 in the anticodon stem and loop of transfer RNAs. This is tRNA pseudouridine synthase A from Syntrophomonas wolfei subsp. wolfei (strain DSM 2245B / Goettingen).